We begin with the raw amino-acid sequence, 371 residues long: MKNNYTSLKSPLDEEDELKTDHEIDLEKGLLPEYNSEEEGTLPLYSDISKLANPVPEDSSTGPTEIANPNVERRQEFKDSHPNIYFLLRLLISVLAVSVVFFTAWVCVNPLEKSIFGKVAFSVTIGITCPILFIATFCFFETWTQAVAQCIKVTVIFLAQCVKVTVIFLAQCVKVTAVFLAKCVKVIAVGLYNSKKDLVVTIWLAWVVICFILFGCVKDGRLNLNKALICSTCSISAALFFILLLVCIPIWTLKHMLFGLFQVLGVQSCVVIVTKGLMYLFDKHIDATGYEIEASSLFVIGNFLFFYEMERPGALKRMPKFIGNGIASFLGGLGNAFGGIGNAIGRIGNAFRGANDNNDIPLGEMDVESEV.

8 helical membrane-spanning segments follow: residues 86–106, 120–140, 153–173, 197–217, 233–253, 257–277, 287–307, and 321–341; these read FLLR…TAWV, AFSV…FCFF, VTVI…AQCV, DLVV…FGCV, CSIS…IWTL, LFGL…TKGL, ATGY…LFFY, and FIGN…GGIG.

Belongs to the WTF family. As to quaternary structure, homomer. Interacts with other proteins that exhibit high sequence similarity.

It localises to the spore membrane. The protein resides in the vacuole membrane. Functionally, acts as a suppressor component of the dual wtf meiotic drive system, and can suppress but not confer meiotic drive by compatible poisons. Wtf meiotic drive systems promote unequal transmission of alleles from the parental zygote to progeny spores by encoding a poison and an antidote from the same locus; the poison is trans-acting and forms toxic aggregates in all spores within an ascus, wherease the antidote is spore-specific and targets aggregates for degradation by the vacuole. Meiotic drive by wtf systems therefore lead to poisoning of all progeny that do not inherit the dual poison/antidote allele, or express a compatible antidote. The protein is Meiotic drive suppressor wtf18 of Schizosaccharomyces kambucha (Fission yeast).